We begin with the raw amino-acid sequence, 309 residues long: tRNA pseudouridine synthase B (309 aa).

Asp-52 (nucleophile) is an active-site residue.

The protein belongs to the pseudouridine synthase TruB family. Type 1 subfamily.

It catalyses the reaction uridine(55) in tRNA = pseudouridine(55) in tRNA. Its function is as follows. Responsible for synthesis of pseudouridine from uracil-55 in the psi GC loop of transfer RNAs. This Leptospira interrogans serogroup Icterohaemorrhagiae serovar copenhageni (strain Fiocruz L1-130) protein is tRNA pseudouridine synthase B.